The primary structure comprises 643 residues: Fructose-1,6-bisphosphatase class 3 (643 aa).

The protein belongs to the FBPase class 3 family. Requires Mn(2+) as cofactor.

It carries out the reaction beta-D-fructose 1,6-bisphosphate + H2O = beta-D-fructose 6-phosphate + phosphate. Its pathway is carbohydrate biosynthesis; gluconeogenesis. This is Fructose-1,6-bisphosphatase class 3 from Lacticaseibacillus casei (strain BL23) (Lactobacillus casei).